The following is a 242-amino-acid chain: N-alpha-acetyltransferase 60 (242 aa).

The Cytoplasmic portion of the chain corresponds to 1-192 (MTEAVPSSAL…GGHPPWTILD (192 aa)). The 170-residue stretch at 13–182 (VSLRLLCHDD…DGFTYVLYIN (170 aa)) folds into the N-acetyltransferase domain. A substrate-binding site is contributed by Tyr-38. Lys-79 carries the post-translational modification N6-acetyllysine; by autocatalysis. Residue Tyr-97 is part of the active site. Residue Leu-99 participates in substrate binding. Residue 101–103 (LGV) coordinates acetyl-CoA. Lys-105, Lys-109, and Lys-121 each carry N6-acetyllysine; by autocatalysis. 109 to 114 (KHGIGS) contacts acetyl-CoA. His-138 is an active-site residue. Residues Asn-143 and 150–153 (YENR) contribute to the acetyl-CoA site. N6-acetyllysine; by autocatalysis is present on Lys-156. The required for homodimerization stretch occupies residues 162-173 (PYYYSIRGVLKD). Substrate is bound at residue Tyr-165. Residues 193–236 (YIQHLGSALANLSPCSIPHRIYRQAQSLLCSFLPWSSISTKGGI) constitute an intramembrane region (helical). Topologically, residues 237–242 (EYSRTM) are cytoplasmic.

The protein belongs to the acetyltransferase family. NAA60 subfamily. In terms of assembly, monomer and homodimer; monomer in presence of substrate and homodimer in its absence. In terms of processing, acetylated: autoacetylation is required for optimal acetyltransferase activity.

It localises to the golgi apparatus membrane. It carries out the reaction N-terminal L-methionyl-[transmembrane protein] + acetyl-CoA = N-terminal N(alpha)-acetyl-L-methionyl-[transmembrane protein] + CoA + H(+). The enzyme catalyses L-lysyl-[protein] + acetyl-CoA = N(6)-acetyl-L-lysyl-[protein] + CoA + H(+). In terms of biological role, N-alpha-acetyltransferase that specifically mediates the acetylation of N-terminal residues of the transmembrane proteins, with a strong preference for N-termini facing the cytosol. Displays N-terminal acetyltransferase activity towards a range of N-terminal sequences including those starting with Met-Lys, Met-Val, Met-Ala and Met-Met. Required for normal chromosomal segregation during anaphase. May also show histone acetyltransferase activity; such results are however unclear in vivo and would require additional experimental evidences. The protein is N-alpha-acetyltransferase 60 (NAA60) of Bos taurus (Bovine).